Consider the following 237-residue polypeptide: BTB/POZ domain-containing protein KCTD6 (237 aa).

The segment at 1 to 104 is interaction with ANK1 isoform Mu7; sequence MDNGDWGYMM…FYQIEPLIQC (104 aa). The interval 10-110 is interaction with CUL3; it reads MSDPVTLNVG…LIQCLNDPRP (101 aa). A BTB domain is found at 12–81; the sequence is DPVTLNVGGH…LRTSELTLPL (70 aa). Residues 113 to 187 form an interaction with USP21 region; sequence PMDTFEEVVE…TFGPCDYHQE (75 aa).

In terms of assembly, homopentamer. Interacts with KCTD11; KCTD6 and KCTD11 may associate in heteropentameric assemblies. Interacts (via BTB domain) with CUL3; initially a 4:4 stoichiometry has been reported, however, electron microscopy revealed pentameric states with a five-pointed pinwheel shape. The interaction with CUL3 is indicative for a participation in a BCR (BTB-CUL3-RBX1) E3 ubiquitin-protein ligase complex. Interacts with HDAC1; probably indirect as the interaction requires the presence of KCTD11. Interacts with USP21 (preferentially catalytic inactive form). Interacts with ANK1 isoform Mu7; detected in striated muscle. Interacts with USP11. In terms of tissue distribution, highly expressed in cerebellum and brain.

The protein resides in the cytoplasm. The protein localises to the myofibril. It localises to the sarcomere. It is found in the m line. It participates in protein modification; protein ubiquitination. Probable substrate-specific adapter of a BCR (BTB-CUL3-RBX1) E3 ubiquitin-protein ligase complex mediating the ubiquitination and subsequent proteasomal degradation of target proteins. Promotes the ubiquitination of HDAC1; the function seems to depend on KCTD11:KCTD6 oligomerization. Can function as antagonist of the Hedgehog pathway by affecting the nuclear transfer of transcription factor GLI1; the function probably occurs via HDAC1 down-regulation, keeping GLI1 acetylated and inactive. Inhibits cell growth and tumorigenicity of medulloblastoma (MDB). Involved in regulating protein levels of ANK1 isoform Mu7 probably implicating CUL3-dependent proteasomal degradation. In Mus musculus (Mouse), this protein is BTB/POZ domain-containing protein KCTD6 (Kctd6).